The sequence spans 150 residues: Peptide deformylase 1 (150 aa).

2 residues coordinate Fe cation: cysteine 88 and histidine 130. Residue glutamate 131 is part of the active site. Residue histidine 134 coordinates Fe cation.

The protein belongs to the polypeptide deformylase family. Fe(2+) serves as cofactor.

It catalyses the reaction N-terminal N-formyl-L-methionyl-[peptide] + H2O = N-terminal L-methionyl-[peptide] + formate. Removes the formyl group from the N-terminal Met of newly synthesized proteins. Requires at least a dipeptide for an efficient rate of reaction. N-terminal L-methionine is a prerequisite for activity but the enzyme has broad specificity at other positions. In Clostridium acetobutylicum (strain ATCC 824 / DSM 792 / JCM 1419 / IAM 19013 / LMG 5710 / NBRC 13948 / NRRL B-527 / VKM B-1787 / 2291 / W), this protein is Peptide deformylase 1.